Consider the following 164-residue polypeptide: Pleckstrin homology domain-containing family J member 1 (164 aa).

The region spanning 15–108 (PAEMAAELGM…WMEALQRASY (94 aa)) is the PH domain.

The chain is Pleckstrin homology domain-containing family J member 1 (Plekhj1) from Mus musculus (Mouse).